The chain runs to 202 residues: MSRYTGSIYKKSRRLGFSLLENNKEFNSGKKRTYGPGQHGNKKVKLSNYGQQLVEKQKLMFLYGLNDRQFRRLYRVALGRPGVLTLNLLQVLESRLDSLVYRAGFAPTRRAARQLVNHSHVLVNNKKVNIPSALVEVGSTIALKAKSLEIPLIKNTLNKPADFIELIDKEKKVAKLARLPERNELPADVNEAYVVEWYNRLM.

One can recognise an S4 RNA-binding domain in the interval 94–157; sequence SRLDSLVYRA…LEIPLIKNTL (64 aa).

It belongs to the universal ribosomal protein uS4 family. As to quaternary structure, part of the 30S ribosomal subunit. Contacts protein S5. The interaction surface between S4 and S5 is involved in control of translational fidelity.

Functionally, one of the primary rRNA binding proteins, it binds directly to 16S rRNA where it nucleates assembly of the body of the 30S subunit. In terms of biological role, with S5 and S12 plays an important role in translational accuracy. This is Small ribosomal subunit protein uS4 from Ureaplasma parvum serovar 3 (strain ATCC 27815 / 27 / NCTC 11736).